The following is a 662-amino-acid chain: Translation factor GUF1, mitochondrial (662 aa).

The N-terminal 28 residues, 1 to 28 (MYIHSSRTVLARYGSRTPLLRPSVLGRY), are a transit peptide targeting the mitochondrion. In terms of domain architecture, tr-type G spans 62–244 (ENYRNFSIVA…AIVDHIPAPD (183 aa)). Residues 71–78 (AHVDHGKS), 137–141 (DTPGH), and 191–194 (NKID) each bind GTP.

It belongs to the TRAFAC class translation factor GTPase superfamily. Classic translation factor GTPase family. LepA subfamily.

The protein resides in the mitochondrion inner membrane. The catalysed reaction is GTP + H2O = GDP + phosphate + H(+). Functionally, promotes mitochondrial protein synthesis. May act as a fidelity factor of the translation reaction, by catalyzing a one-codon backward translocation of tRNAs on improperly translocated ribosomes. Binds to mitochondrial ribosomes in a GTP-dependent manner. The chain is Translation factor GUF1, mitochondrial from Meyerozyma guilliermondii (strain ATCC 6260 / CBS 566 / DSM 6381 / JCM 1539 / NBRC 10279 / NRRL Y-324) (Yeast).